We begin with the raw amino-acid sequence, 283 residues long: Nucleoid occlusion protein (283 aa).

A disordered region spans residues 1-21; the sequence is MKHSFSRFFGFGEKEEEPEIA. Residues 148 to 167 constitute a DNA-binding region (H-T-H motif); the sequence is EALAQRLGKGQSTIANKLRL.

It belongs to the ParB family.

It is found in the cytoplasm. The protein resides in the nucleoid. In terms of biological role, effects nucleoid occlusion by binding relatively nonspecifically to DNA and preventing the assembly of the division machinery in the vicinity of the nucleoid, especially under conditions that disturb the cell cycle. It helps to coordinate cell division and chromosome segregation by preventing the formation of the Z ring through the nucleoid, which would cause chromosome breakage. This chain is Nucleoid occlusion protein, found in Bacillus velezensis (strain DSM 23117 / BGSC 10A6 / LMG 26770 / FZB42) (Bacillus amyloliquefaciens subsp. plantarum).